We begin with the raw amino-acid sequence, 399 residues long: C-type lectin domain family 4 member M (399 aa).

At 1-49 (MSDSKEQRVQPLGLLEEDPTTSGIRLFPRDFQFQQTHGHKSSTGCLGHG) the chain is on the cytoplasmic side. Residues 14 to 15 (LL) carry the Endocytosis signal motif. Residues 50–70 (PLVLQLLSFTLLAGVLVAILV) form a helical; Signal-anchor for type II membrane protein membrane-spanning segment. Residues 71-399 (QVYKVPSSLS…KKPTACFRDE (329 aa)) lie on the Extracellular side of the membrane. N-linked (GlcNAc...) asparagine glycosylation is present at Asn-92. 7 tandem repeats follow at residues 108-130 (KLQE…PEKS), 131-153 (TLQE…PEKS), 154-176 (RLQE…PEKS), 177-199 (KQQE…PEKS), 200-222 (KQQE…PEKS), 223-245 (KQQE…PDQS), and 246-268 (KQQQ…CCRC). The tract at residues 108 to 269 (KLQEIYQELI…AFERLCCRCP (162 aa)) is 7 X approximate tandem repeats. 4 disulfide bridges follow: Cys-265/Cys-395, Cys-268/Cys-279, Cys-296/Cys-389, and Cys-368/Cys-381. In terms of domain architecture, C-type lectin spans 274–390 (FFQGNCYFIS…CNVDNYWICK (117 aa)). The Ca(2+) site is built by Glu-359, Asn-361, Ser-363, Glu-366, Asn-377, and Asp-378. Asn-361 carries N-linked (GlcNAc...) asparagine glycosylation.

Homotetramer.

It localises to the membrane. Functionally, probable pathogen-recognition receptor involved in peripheral immune surveillance in liver. May mediate the endocytosis of pathogens which are subsequently degraded in lysosomal compartments. Probably recognizes in a calcium-dependent manner high mannose N-linked oligosaccharides in a variety of pathogen antigens. Is a receptor for ICAM3, probably by binding to mannose-like carbohydrates. In Hylobates lar (Lar gibbon), this protein is C-type lectin domain family 4 member M (CLEC4M).